The following is a 307-amino-acid chain: uncharacterized protein (307 aa).

This is an uncharacterized protein from Saccharum officinarum (Sugarcane).